The following is a 554-amino-acid chain: MKRKYPYSLAKGLTSTQIAVIVAVIVIVIIIGVVAGFVLTKGPSTTAVTTTVTSTFTTTTTIPSTTTSTPSNTVVFYTWWGGGDGGEALSQIIPAVKQYAGLQMQTYSIPGAGGTNAKYAILALIQAGKPPAAFQVHYGPEMISYVEAAPNGIHTFVNMTPYLIQWGLLNNAVYAVLQAGAYNGTLLSVPINVHRGAVLYVNTQLLREYNLPFPYNFSTLVYDTVQLANHGVSPWIIPGGDGGWDQFNVWEDIFLYLAGPQLYNELIYGTLNFSNPTVQKLINETNYWFLNFTSYNYPGWQSMSWEQAFALIAQGKVAFQANGNWVTNYASYINVTVYPPLPQYISNSSVSVVETPFPGTQHYYALVIDTIGIPVGPQEQQALQLAHFWSSYQGQEVWTKYKAVTYYKNGTDWYAQPAQWYDYQQLINTSEQNFVYQLSDGGVFDDVFAQIDSGLLTLQQVGKVGLSAWNSTLVSSMQQEQNEWLAAAKLGLGYLGFPGHPFAGYYPPWVTNPSAYGLTNNTQKTSNSVMLFLLPFLALPLAIASIDNKYYLLK.

The Cytoplasmic portion of the chain corresponds to Met1 to Gln17. The chain crosses the membrane as a helical span at residues Ile18–Val38. The Extracellular segment spans residues Leu39–Thr525. Residues Ser526–Ile546 traverse the membrane as a helical segment. Residues Asp547 to Lys554 are Cytoplasmic-facing.

It belongs to the bacterial solute-binding protein 1 family. In terms of assembly, the complex is composed of two ATP-binding proteins (GlcV), two transmembrane proteins (GlcT and GlcU) and a solute-binding protein (GlcS).

It localises to the cell membrane. Its activity is regulated as follows. Binding of glucose is strongly inhibited by galactose and mannose. Part of the ABC transporter complex GlcSTUV involved in glucose uptake. Binds glucose. Can also bind galactose and mannose. The sequence is that of Glucose-binding protein GlcS from Saccharolobus solfataricus (strain ATCC 35092 / DSM 1617 / JCM 11322 / P2) (Sulfolobus solfataricus).